The primary structure comprises 459 residues: E3 ubiquitin-protein ligase RNF25 (459 aa).

One can recognise an RWD domain in the interval 18–128 (SEVEVLESIY…EKGKEILTDN (111 aa)). Cys-135, Cys-138, Cys-153, His-155, His-158, Cys-161, Cys-198, and Cys-201 together coordinate Zn(2+). Residues 135–202 (CVICLYGFQE…AVGVQCPVCR (68 aa)) form an RING-type zinc finger. Disordered stretches follow at residues 268 to 309 (PPAP…PPLP) and 322 to 459 (TRSN…KDGS). Polar residues predominate over residues 282 to 303 (KGSQPPSTLAAELSTSPAVQST). 4 stretches are compositionally biased toward basic and acidic residues: residues 349 to 370 (QPERRHPKGGECHAPKGTRDTQ), 378 to 389 (PLKEPMDLKPEP), 413 to 424 (RTRDCVRWERSK), and 446 to 459 (TRRESLGLESKDGS). Residue Ser-450 is modified to Phosphoserine.

Belongs to the RNF25 family. Interacts with UBE2D2, and may also interact with UBE2E1 and UBE2E3. Interacts with RELA/p65. In terms of processing, ubiquitinated; autoubiquitinated.

The protein localises to the cytoplasm. The catalysed reaction is S-ubiquitinyl-[E2 ubiquitin-conjugating enzyme]-L-cysteine + [acceptor protein]-L-lysine = [E2 ubiquitin-conjugating enzyme]-L-cysteine + N(6)-ubiquitinyl-[acceptor protein]-L-lysine.. The protein operates within protein modification; protein ubiquitination. Functionally, E3 ubiquitin-protein ligase that plays a key role in the RNF14-RNF25 translation quality control pathway, a pathway that takes place when a ribosome has stalled during translation, and which promotes ubiquitination and degradation of translation factors on stalled ribosomes. Catalyzes ubiquitination of RPS27A in response to ribosome collisions, promoting activation of RNF14. RNF25 catalyzes ubiquitination of other ribosomal proteins on stalled ribosomes, such as RPL0, RPL1, RPL12, RPS13 and RPS17. Also involved in ubiquitination and degradation of stalled ETF1/eRF1. Independently of its function in the response to stalled ribosomes, mediates ubiquitination and subsequent proteasomal degradation of NKD2. May also stimulate transcription mediated by NF-kappa-B via its interaction with RELA/p65. This chain is E3 ubiquitin-protein ligase RNF25, found in Homo sapiens (Human).